We begin with the raw amino-acid sequence, 167 residues long: Transmembrane protein 229B (167 aa).

The Cytoplasmic segment spans residues 1-14 (MASAEPLTALSRWY). A helical transmembrane segment spans residues 15–35 (LYAIHGYFCEVMFTAAWEFVV). Topologically, residues 36-40 (NLNWK) are extracellular. A helical membrane pass occupies residues 41–61 (FPGVTSVWALFIYGTSILIVE). Residues 62 to 73 (RMYLRLRGRCPL) lie on the Cytoplasmic side of the membrane. A helical transmembrane segment spans residues 74–94 (LLRCLIYTLWTYLWEFTTGFI). The Extracellular segment spans residues 95-109 (LRQFNACPWDYSQFD). The helical transmembrane segment at 110–130 (FDFMGLITLEYAVPWFCGALI) threads the bilayer. Over 131 to 167 (MEQFIIRNTLRLRFDKDAEPGEPSGALALANGHVKTD) the chain is Cytoplasmic.

Belongs to the TMEM229 family.

Its subcellular location is the membrane. The protein is Transmembrane protein 229B (TMEM229B) of Homo sapiens (Human).